The chain runs to 359 residues: Peptide chain release factor 1 (359 aa).

Gln236 carries the post-translational modification N5-methylglutamine.

This sequence belongs to the prokaryotic/mitochondrial release factor family. In terms of processing, methylated by PrmC. Methylation increases the termination efficiency of RF1.

The protein localises to the cytoplasm. Functionally, peptide chain release factor 1 directs the termination of translation in response to the peptide chain termination codons UAG and UAA. The chain is Peptide chain release factor 1 from Streptococcus pneumoniae (strain Taiwan19F-14).